The following is a 104-amino-acid chain: MNNTLERLATLLEERKNADPQHSYVAHLYQAGQDKILKKLGEEAIETILAAKSRESDAIIYETADLWFHSLVMLAESGLRPEQVLSELERRFGLSGLEEKANRG.

Belongs to the PRA-PH family.

It localises to the cytoplasm. It catalyses the reaction 1-(5-phospho-beta-D-ribosyl)-ATP + H2O = 1-(5-phospho-beta-D-ribosyl)-5'-AMP + diphosphate + H(+). The protein operates within amino-acid biosynthesis; L-histidine biosynthesis; L-histidine from 5-phospho-alpha-D-ribose 1-diphosphate: step 2/9. The sequence is that of Phosphoribosyl-ATP pyrophosphatase from Nitrosococcus oceani (strain ATCC 19707 / BCRC 17464 / JCM 30415 / NCIMB 11848 / C-107).